The following is a 309-amino-acid chain: D-alanine--D-alanine ligase (309 aa).

The ATP-grasp domain maps to Lys106–Glu305. Val136–Thr191 is an ATP binding site. Mg(2+) is bound by residues Asp259, Glu272, and Asn274.

It belongs to the D-alanine--D-alanine ligase family. Requires Mg(2+) as cofactor. Mn(2+) serves as cofactor.

The protein localises to the cytoplasm. It carries out the reaction 2 D-alanine + ATP = D-alanyl-D-alanine + ADP + phosphate + H(+). The protein operates within cell wall biogenesis; peptidoglycan biosynthesis. Its function is as follows. Cell wall formation. The sequence is that of D-alanine--D-alanine ligase from Pasteurella multocida (strain Pm70).